A 370-amino-acid polypeptide reads, in one-letter code: Coiled-coil domain-containing protein 89 (370 aa).

Residues 1 to 38 (MPQEESAPRMDTPSSEEPLDKQNRKLEDQEEEMGFKEL) form a disordered region. T12 is modified (phosphothreonine). Basic and acidic residues predominate over residues 18-38 (PLDKQNRKLEDQEEEMGFKEL). Residues 19-346 (LDKQNRKLED…YDELRLQSEA (328 aa)) are a coiled coil.

It belongs to the CCDC89 family. In terms of assembly, interacts with HEY1.

It localises to the cytoplasm. Its subcellular location is the nucleus. The chain is Coiled-coil domain-containing protein 89 from Bos taurus (Bovine).